Here is a 464-residue protein sequence, read N- to C-terminus: Spore coat protein SP65 (464 aa).

An N-terminal signal peptide occupies residues 1–17; that stretch reads MKVLLLLVCLVFAYVNA. A Follistatin-like 1 domain is found at 21-43; it reads ACYNVVCPSNYQCRAEGDQAYCV. An N-linked (GlcNAc...) asparagine glycan is attached at Asn111. 2 Follistatin-like domains span residues 121-143 and 151-173; these read VCRD…PHCV and LCRV…PTCL. Residue Asn247 is glycosylated (N-linked (GlcNAc...) asparagine). The interval 250–320 is disordered; sequence STTGATTGAT…STTGAATTAP (71 aa).

Binds to the C-terminal region of pspB.

Its subcellular location is the spore wall. Its function is as follows. Forms a triad with cellulose and pspB that is essential for spore outer layer formation. In Dictyostelium discoideum (Social amoeba), this protein is Spore coat protein SP65 (cotE).